The following is a 396-amino-acid chain: Glideosome-associated protein 50 (396 aa).

Topologically, residues 1-369 are lumenal; sequence MNYCKTTFHI…PMGNKDTFVR (369 aa). Positions 195 and 256 each coordinate a metal cation. A helical membrane pass occupies residues 370 to 390; that stretch reads VVGTIGILIGSVIVFIGASSF. At 391 to 396 the chain is on the cytoplasmic side; it reads LSKNMK.

The protein belongs to the metallophosphoesterase superfamily. Purple acid phosphatase family. As to quaternary structure, component of the glideosome complex composed of GAP50, GAP45, MTIP and MyoA; the complex is formed during the late schizont stage and in merozoites. MyoA, MTIP and GAP45 probably form an initial complex in the cytoplasm which is then recruited to the outer face of the inner membrane complex via the interaction with GAP50. Interacts with GAP45; the interaction is independent of GAP45 phosphorylation status and can also occur independently of the formation of the glideosome complex. Interacts with human factor H isoform CFH (via sushi 6-7 domains) and isoform FHL-1 (via sushi 6-7 domains); the interaction occurs in the vector mosquito midgut at the surface of activated gametocytes; the interaction protects the parasite from alternative complement pathway-mediated elimination. The cofactor is a metal cation. Post-translationally, the N-terminus signal is likely to be cleaved.

The protein localises to the inner membrane complex. The protein resides in the cell membrane. It localises to the endoplasmic reticulum membrane. It carries out the reaction a phosphate monoester + H2O = an alcohol + phosphate. Activity is independent of metal ions. Component of the glideosome complex, an inner membrane complex structure involved in parasite gliding motility and host cell invasion. During the asexual blood stage, may play a role in the assembly and anchoring of the glideosome complex to the inner membrane complex. During the sexual stage in the vector mosquito midgut, protects gametocytes against host alternative complement pathway-mediated elimination by interacting with host complement inhibitor factor H. Has phosphatase activity towards nucleotides such as ATP, vitamins B1 and B6, phosphorylated sugars, glycerol phosphates and inositol triphosphates. However, the phosphatase activity is controversial. The chain is Glideosome-associated protein 50 from Plasmodium falciparum (isolate 3D7).